We begin with the raw amino-acid sequence, 496 residues long: Glycerol kinase (496 aa).

T11 is an ADP binding site. 3 residues coordinate ATP: T11, T12, and S13. T11 is a binding site for sn-glycerol 3-phosphate. R15 serves as a coordination point for ADP. The sn-glycerol 3-phosphate site is built by R81, E82, Y133, and D242. R81, E82, Y133, D242, and Q243 together coordinate glycerol. 2 residues coordinate ADP: T264 and G307. Residues T264, G307, Q311, and G408 each coordinate ATP. Residues G408 and N412 each coordinate ADP.

The protein belongs to the FGGY kinase family.

It catalyses the reaction glycerol + ATP = sn-glycerol 3-phosphate + ADP + H(+). Its pathway is polyol metabolism; glycerol degradation via glycerol kinase pathway; sn-glycerol 3-phosphate from glycerol: step 1/1. Inhibited by fructose 1,6-bisphosphate (FBP). Its function is as follows. Key enzyme in the regulation of glycerol uptake and metabolism. Catalyzes the phosphorylation of glycerol to yield sn-glycerol 3-phosphate. The protein is Glycerol kinase of Trichlorobacter lovleyi (strain ATCC BAA-1151 / DSM 17278 / SZ) (Geobacter lovleyi).